Reading from the N-terminus, the 592-residue chain is Transducer of Cdc42-dependent actin assembly protein 1 homolog (592 aa).

The region spanning 3–267 (DSCSWDQLWD…DIGLIDPSRD (265 aa)) is the F-BAR domain. Disordered regions lie at residues 343–366 (FGGG…QQRA) and 447–519 (SATS…DELY). The REM-1 domain occupies 359-436 (TLPPQQRARK…IQKFKILLDD (78 aa)). Positions 363–441 (QQRARKIAGK…ILLDDVNAQL (79 aa)) form a coiled coil. Positions 447–457 (SATSVGGSDTP) are enriched in polar residues. Residues 459–474 (SIRSVSSASSGVTSRV) are compositionally biased toward low complexity. The segment covering 495–510 (FSGSNGGSDTDPTING) has biased composition (polar residues). The region spanning 527 to 589 (PVLGEAIAQF…PSSYLKVTWF (63 aa)) is the SH3 domain.

The protein belongs to the FNBP1 family. Interacts (via SH3 domain) with wsp-1. Interacts with cdc-42 and (via SH3 domain) with wve-1. In terms of tissue distribution, expressed in the germline and specifically in the gonads.

The protein localises to the cell junction. It localises to the apical cell membrane. The protein resides in the basolateral cell membrane. It is found in the cytoplasmic vesicle. Its subcellular location is the cytoplasm. The protein localises to the perinuclear region. It localises to the recycling endosome. In terms of biological role, plays a role in protein trafficking, actin organization and embryonic morphogenesis. Potentially acts as a cdc-42 effector. May play a role in hypodermal P-cell nuclear positioning. Together with toca-2, is required for protein trafficking regulating yolk protein clathrin-mediated endocytosis by oocytes during oogenesis and retrograde recycling and the sorting of recycling endosome cargo proteins such as mig-14. Also, together with toca-2, controls the distribution of actin at cell junctions. The chain is Transducer of Cdc42-dependent actin assembly protein 1 homolog from Caenorhabditis elegans.